We begin with the raw amino-acid sequence, 357 residues long: MHNQYGSIFSITTWGESHGPAIGVVIDGCPAGLSLSPEDFLPAMARRRPGQLHTSPRQEPDLVTILSGVYQNKTTGTPISLLIENKDVSSSSYEQLQHCYRPGHAQFAYEGKYGFADNRGGGRASARETASRVAAGVIAKKILLSQRIETLAFLSGFGTLESKNYPKLSDSLIQQVHTSPFYTLLPQEEIQNLLLLNPDDSFGGVVSFITSPLPIGLGEPVFGKLPALLAAAMMSIPAAKGFEIGAGFSSSQMTGSAYLDAFIADESGVSLQSNRCGGALGGISIGQPLEGRVAFKPTSSIKKPCSSVLKDGTLIAYRTPNQGRHDPCVAIRAVAVVEAMLDLTLVDLLLQHRCTQL.

Residue Arg47 coordinates NADP(+). FMN is bound by residues 123–125, Gly281, 296–300, and Arg324; these read RAS and KPTSS.

It belongs to the chorismate synthase family. In terms of assembly, homotetramer. FMNH2 is required as a cofactor.

It catalyses the reaction 5-O-(1-carboxyvinyl)-3-phosphoshikimate = chorismate + phosphate. It participates in metabolic intermediate biosynthesis; chorismate biosynthesis; chorismate from D-erythrose 4-phosphate and phosphoenolpyruvate: step 7/7. Its function is as follows. Catalyzes the anti-1,4-elimination of the C-3 phosphate and the C-6 proR hydrogen from 5-enolpyruvylshikimate-3-phosphate (EPSP) to yield chorismate, which is the branch point compound that serves as the starting substrate for the three terminal pathways of aromatic amino acid biosynthesis. This reaction introduces a second double bond into the aromatic ring system. This chain is Chorismate synthase, found in Chlamydia trachomatis serovar D (strain ATCC VR-885 / DSM 19411 / UW-3/Cx).